Consider the following 239-residue polypeptide: MNKNIIIKSIAALTILTSITGVGTTVVDGIQQTAKAENSVKLITNTNVAPYSGVTWMGAGTGFVVGNQTIITNKHVTYHMKVGDEIKAHPNGFYNNGGGLYKVTKIVDYPGKEDIAVVQVEEKSTQPKGRKFKDFTSKFNIASEAKENEPISVIGYPNPNGNKLQMYESTGKVLSVNGNIVTSDAVVQPGSSGSPILNSKREAIGVMYASDKPTGESTRSFAVYFSPEIKKFIADNLDK.

The first 36 residues, 1–36, serve as a signal peptide directing secretion; it reads MNKNIIIKSIAALTILTSITGVGTTVVDGIQQTAKA. Residues H75, D114, and S192 each act as charge relay system in the active site.

This sequence belongs to the peptidase S1B family.

Its subcellular location is the secreted. The sequence is that of Serine protease SplD (splD) from Staphylococcus aureus (strain COL).